The primary structure comprises 891 residues: von Willebrand factor A domain-containing protein 7 (891 aa).

A signal peptide spans 1–28 (MLPTEVPQSHPGPSALLLLQLLLPPTSA). N55 carries N-linked (GlcNAc...) asparagine glycosylation. The interval 237-272 (PKPPGKCSHGGHFDRSSSQPPRGGINKDSTSPGFSP) is disordered. Residues 313-506 (ASSLSFVLDT…SMAALVTLPL (194 aa)) form the VWFA domain.

Expressed at low level in different cell lines.

Its subcellular location is the secreted. The chain is von Willebrand factor A domain-containing protein 7 (VWA7) from Homo sapiens (Human).